The sequence spans 464 residues: Argininosuccinate lyase (464 aa).

This sequence belongs to the lyase 1 family. Argininosuccinate lyase subfamily.

It localises to the cytoplasm. The enzyme catalyses 2-(N(omega)-L-arginino)succinate = fumarate + L-arginine. The protein operates within amino-acid biosynthesis; L-arginine biosynthesis; L-arginine from L-ornithine and carbamoyl phosphate: step 3/3. Strongly inhibited by L-arginine. Inhibitory effects are lowered at pH 7.0 compared to those at pH 8.0. At 37 degrees Celsius and pH 7.5, activity decreases to 73% and 31% in the presence of 1 mM and 10 mM arginine, respectively. Activity also decreases to 84%, 93%, 82% and 85% in the presence of 10 mM sodium citrate, citrulline, asparatate and glutamate, respectively. Activity decreases to 96% in presence of 1 mM L-lysine. Its function is as follows. Catalyzes the last step of arginine biosynthesis, the conversion of argininosuccinate into L-arginine and fumarate. The chain is Argininosuccinate lyase from Arthrospira platensis (strain NIES-39 / UTEX 3086 / IAM M-135) (Spirulina platensis).